The sequence spans 236 residues: Alpha-tubulin N-acetyltransferase (236 aa).

One can recognise an N-acetyltransferase domain in the interval 21 to 201 (ASVPDGVSRW…NKFVVFHGFF (181 aa)). Acetyl-CoA-binding positions include 134-147 (FYVDESCQRQGYGK) and 171-180 (SDKLLGFMKK). The segment at 217–236 (SPTGAAAAATGTKAKNEMPG) is disordered. A compositionally biased stretch (low complexity) spans 219–229 (TGAAAAATGTK).

Belongs to the acetyltransferase ATAT1 family.

The enzyme catalyses L-lysyl-[alpha-tubulin] + acetyl-CoA = N(6)-acetyl-L-lysyl-[alpha-tubulin] + CoA + H(+). Specifically acetylates 'Lys-40' in alpha-tubulin on the lumenal side of microtubules. Promotes microtubule destabilization and accelerates microtubule dynamics; this activity may be independent of acetylation activity. Acetylates alpha-tubulin with a slow enzymatic rate, due to a catalytic site that is not optimized for acetyl transfer. Enters the microtubule through each end and diffuses quickly throughout the lumen of microtubules. Acetylates only long/old microtubules because of its slow acetylation rate since it does not have time to act on dynamically unstable microtubules before the enzyme is released. This Leishmania braziliensis protein is Alpha-tubulin N-acetyltransferase.